The chain runs to 150 residues: U1 small nuclear ribonucleoprotein C (150 aa).

The Matrin-type zinc finger occupies 4–36; the sequence is YYCDYCKSYLTHDTMSVRKSHLQGRNHIKFYCD. Residues 66 to 127 form a disordered region; that stretch reads SDAKKSNGSS…PPNLSGLPLP (62 aa). Residues 80 to 92 are compositionally biased toward basic and acidic residues; sequence DIDKKENSSDHNK. A compositionally biased stretch (acidic residues) spans 103–112; the sequence is NDNDDDDDEM.

The protein belongs to the U1 small nuclear ribonucleoprotein C family. U1 snRNP is composed of the 7 core Sm proteins B/B', D1, D2, D3, E, F and G that assemble in a heptameric protein ring on the Sm site of the small nuclear RNA to form the core snRNP, and at least 3 U1 snRNP-specific proteins U1-70K, U1-A and U1-C. U1-C interacts with U1 snRNA and the 5' splice-site region of the pre-mRNA.

It localises to the nucleus. Component of the spliceosomal U1 snRNP, which is essential for recognition of the pre-mRNA 5' splice-site and the subsequent assembly of the spliceosome. U1-C is directly involved in initial 5' splice-site recognition for both constitutive and regulated alternative splicing. The interaction with the 5' splice-site seems to precede base-pairing between the pre-mRNA and the U1 snRNA. Stimulates commitment or early (E) complex formation by stabilizing the base pairing of the 5' end of the U1 snRNA and the 5' splice-site region. The sequence is that of U1 small nuclear ribonucleoprotein C from Candida albicans (strain WO-1) (Yeast).